The chain runs to 403 residues: Probable tRNA sulfurtransferase (403 aa).

Residues 60-165 form the THUMP domain; sequence QLVEERLKPI…KEGVFLSCRT (106 aa). ATP-binding positions include 183–184, 208–209, Arg265, Gly287, and Gln296; these read ML and HF.

Belongs to the ThiI family.

It localises to the cytoplasm. It catalyses the reaction [ThiI sulfur-carrier protein]-S-sulfanyl-L-cysteine + a uridine in tRNA + 2 reduced [2Fe-2S]-[ferredoxin] + ATP + H(+) = [ThiI sulfur-carrier protein]-L-cysteine + a 4-thiouridine in tRNA + 2 oxidized [2Fe-2S]-[ferredoxin] + AMP + diphosphate. It carries out the reaction [ThiS sulfur-carrier protein]-C-terminal Gly-Gly-AMP + S-sulfanyl-L-cysteinyl-[cysteine desulfurase] + AH2 = [ThiS sulfur-carrier protein]-C-terminal-Gly-aminoethanethioate + L-cysteinyl-[cysteine desulfurase] + A + AMP + 2 H(+). Its pathway is cofactor biosynthesis; thiamine diphosphate biosynthesis. Functionally, catalyzes the ATP-dependent transfer of a sulfur to tRNA to produce 4-thiouridine in position 8 of tRNAs, which functions as a near-UV photosensor. Also catalyzes the transfer of sulfur to the sulfur carrier protein ThiS, forming ThiS-thiocarboxylate. This is a step in the synthesis of thiazole, in the thiamine biosynthesis pathway. The sulfur is donated as persulfide by IscS. The polypeptide is Probable tRNA sulfurtransferase (Listeria monocytogenes serotype 4b (strain CLIP80459)).